The following is a 509-amino-acid chain: Glycogen synthase (509 aa).

Lys47 is a binding site for ADP-alpha-D-glucose.

Belongs to the glycosyltransferase 1 family. Bacterial/plant glycogen synthase subfamily.

It catalyses the reaction [(1-&gt;4)-alpha-D-glucosyl](n) + ADP-alpha-D-glucose = [(1-&gt;4)-alpha-D-glucosyl](n+1) + ADP + H(+). The protein operates within glycan biosynthesis; glycogen biosynthesis. In terms of biological role, synthesizes alpha-1,4-glucan chains using ADP-glucose. The chain is Glycogen synthase from Xanthomonas euvesicatoria pv. vesicatoria (strain 85-10) (Xanthomonas campestris pv. vesicatoria).